We begin with the raw amino-acid sequence, 437 residues long: MHIAVVGLSHRTAPVEVREKLSIPEQTMEESLQNLRNHEQVLEASILSTCNRLEIYTLVRNPDLGIAAVRDFLSGHSGLESRDLSPHLFTYHHDEAIAHLMRVTAGLDSLVLGEGQILSQVKKMMRLGQEHKSIGPILNRLLTQAVSTGKRVRSETNLSTGAVSVSSAAVELAQLKLGQSRGQDALVTLETEQIAVVGAGRMSRLLLQHLQAKGASGVVLLNRTIERASALATDFPNLPIQCRGLDDLDQCLSTCSLVFTSTAVDDPIIDANRLNALNRRSSLRLIDIGVPRNIASDVHEVSGVESHDVDDLQEVVERNQEARQQVAREAEGLLLEEGRLFLEWWDSLEAVPTINRLRASLEEIRVEELTKALSRMGPDFSARERKVVEALTKGMINKILHTPVTQLRSPQQRSERQQALQVVEKIFDLESGAATQD.

Substrate is bound by residues 49 to 52 (TCNR), Ser109, 114 to 116 (EGQ), and Gln120. Cys50 functions as the Nucleophile in the catalytic mechanism. Residue 198–203 (GAGRMS) participates in NADP(+) binding.

It belongs to the glutamyl-tRNA reductase family. Homodimer.

The enzyme catalyses (S)-4-amino-5-oxopentanoate + tRNA(Glu) + NADP(+) = L-glutamyl-tRNA(Glu) + NADPH + H(+). It participates in porphyrin-containing compound metabolism; protoporphyrin-IX biosynthesis; 5-aminolevulinate from L-glutamyl-tRNA(Glu): step 1/2. The protein operates within porphyrin-containing compound metabolism; chlorophyll biosynthesis. Catalyzes the NADPH-dependent reduction of glutamyl-tRNA(Glu) to glutamate 1-semialdehyde (GSA). This Synechococcus sp. (strain CC9311) protein is Glutamyl-tRNA reductase.